A 130-amino-acid polypeptide reads, in one-letter code: Protein PELPK2 (130 aa).

Positions 1–32 (MTLKKSFSASLLSPFLIICLIALLSVPVSVGA) are cleaved as a signal peptide. Tandem repeats lie at residues 47-51 (PELPK), 52-56 (PEMPK), 58-62 (PEFPK), 63-67 (LELPK), 69-73 (PEIPK), 74-78 (PEMPK), 80-84 (PEIQK), 91-95 (PELPK), 97-101 (PEFPK), 102-106 (FDFPK), 108-112 (PELPK), 113-117 (PEETK), and 121-125 (FTMPK). A 13 X 5 AA tandem repeat of P-[DEGQ]-[AEFLIV]-[QPT]-K region spans residues 47-125 (PELPKPEMPK…TKVPAFTMPK (79 aa)). Basic and acidic residues predominate over residues 71–84 (IPKPEMPKLPEIQK). Residues 71 to 130 (IPKPEMPKLPEIQKPELPTFPELPKMPEFPKFDFPKLPELPKPEETKVPAFTMPKFPGSP) form a disordered region. Residues 98–117 (EFPKFDFPKLPELPKPEETK) show a composition bias toward basic and acidic residues.

It is found in the secreted. The protein localises to the cell wall. In Arabidopsis thaliana (Mouse-ear cress), this protein is Protein PELPK2.